Reading from the N-terminus, the 149-residue chain is 17 kDa major membrane protein (149 aa).

An N-terminal signal peptide occupies residues 1–19 (MKKIIKLSLLSLSIAGLAS). C20 carries N-palmitoyl cysteine lipidation. Residue C20 is the site of S-diacylglycerol cysteine attachment.

Its subcellular location is the cell outer membrane. In Francisella tularensis subsp. holarctica (strain LVS), this protein is 17 kDa major membrane protein.